The chain runs to 118 residues: Putative pterin-4-alpha-carbinolamine dehydratase (118 aa).

Belongs to the pterin-4-alpha-carbinolamine dehydratase family.

The enzyme catalyses (4aS,6R)-4a-hydroxy-L-erythro-5,6,7,8-tetrahydrobiopterin = (6R)-L-erythro-6,7-dihydrobiopterin + H2O. This Pseudomonas aeruginosa (strain LESB58) protein is Putative pterin-4-alpha-carbinolamine dehydratase.